Consider the following 199-residue polypeptide: Large ribosomal subunit protein mL51 (199 aa).

A mitochondrion-targeting transit peptide spans Met-1–Thr-15.

It belongs to the mitochondrion-specific ribosomal protein mL51 family. As to quaternary structure, component of the mitochondrial ribosome large subunit (39S) which comprises a 16S rRNA and about 50 distinct proteins.

It is found in the mitochondrion. This Caenorhabditis briggsae protein is Large ribosomal subunit protein mL51 (mrpl-51).